The primary structure comprises 296 residues: 33 kDa chaperonin (296 aa).

2 disulfide bridges follow: cysteine 237-cysteine 239 and cysteine 270-cysteine 273.

This sequence belongs to the HSP33 family. Post-translationally, under oxidizing conditions two disulfide bonds are formed involving the reactive cysteines. Under reducing conditions zinc is bound to the reactive cysteines and the protein is inactive.

It localises to the cytoplasm. Its function is as follows. Redox regulated molecular chaperone. Protects both thermally unfolding and oxidatively damaged proteins from irreversible aggregation. Plays an important role in the bacterial defense system toward oxidative stress. The protein is 33 kDa chaperonin of Acetivibrio thermocellus (strain ATCC 27405 / DSM 1237 / JCM 9322 / NBRC 103400 / NCIMB 10682 / NRRL B-4536 / VPI 7372) (Clostridium thermocellum).